Here is a 491-residue protein sequence, read N- to C-terminus: Mitochondrial distribution and morphology protein 12 (491 aa).

An SMP-LTD domain is found at 1–491 (MSIDLNWEAA…VFPSYWTFLV (491 aa)). Residues 72-82 (ESDSSEDEDGE) are compositionally biased toward acidic residues. Disordered stretches follow at residues 72–123 (ESDS…NHHD), 201–313 (GWPD…MRER), and 389–434 (GDED…QPRR). 2 stretches are compositionally biased toward basic and acidic residues: residues 83 to 123 (GHDA…NHHD) and 213 to 229 (MTDHTTGRTRREDHNKN). The span at 230–249 (ETGSPSRPSTAHTNPTQLSH) shows a compositional bias: polar residues. Low complexity predominate over residues 252–262 (SAASSSNNTSN). Polar residues predominate over residues 270-279 (DHTSSTTATT). The segment covering 400-421 (STANTTTAASGSSTDNNNNNNE) has biased composition (low complexity).

This sequence belongs to the MDM12 family. Component of the ER-mitochondria encounter structure (ERMES) or MDM complex, composed of mmm1, mdm10, mdm12 and mdm34. A mmm1 homodimer associates with one molecule of mdm12 on each side in a pairwise head-to-tail manner, and the SMP-LTD domains of mmm1 and mdm12 generate a continuous hydrophobic tunnel for phospholipid trafficking.

The protein localises to the mitochondrion outer membrane. Its subcellular location is the endoplasmic reticulum membrane. Component of the ERMES/MDM complex, which serves as a molecular tether to connect the endoplasmic reticulum (ER) and mitochondria. Components of this complex are involved in the control of mitochondrial shape and protein biogenesis, and function in nonvesicular lipid trafficking between the ER and mitochondria. Mdm12 is required for the interaction of the ER-resident membrane protein mmm1 and the outer mitochondrial membrane-resident beta-barrel protein mdm10. The mdm12-mmm1 subcomplex functions in the major beta-barrel assembly pathway that is responsible for biogenesis of all mitochondrial outer membrane beta-barrel proteins, and acts in a late step after the SAM complex. The mdm10-mdm12-mmm1 subcomplex further acts in the TOM40-specific pathway after the action of the mdm12-mmm1 complex. Essential for establishing and maintaining the structure of mitochondria and maintenance of mtDNA nucleoids. The protein is Mitochondrial distribution and morphology protein 12 of Talaromyces stipitatus (strain ATCC 10500 / CBS 375.48 / QM 6759 / NRRL 1006) (Penicillium stipitatum).